Here is a 48-residue protein sequence, read N- to C-terminus: MTKRKANHVINGMNAAKSQGNGAGYIEDDQLVLTAEQRQNNKKRKKNQ.

The segment at 1–23 (MTKRKANHVINGMNAAKSQGNGA) is disordered.

It belongs to the SspO family.

Its subcellular location is the spore core. This chain is Small, acid-soluble spore protein O, found in Bacillus pumilus (strain SAFR-032).